The following is an 85-amino-acid chain: Large ribosomal subunit protein bL27 (85 aa).

Residues 1–27 (MAHKKAGGSTKNGRDSQSKRLGVKRYG) are disordered.

It belongs to the bacterial ribosomal protein bL27 family.

The polypeptide is Large ribosomal subunit protein bL27 (Halorhodospira halophila (strain DSM 244 / SL1) (Ectothiorhodospira halophila (strain DSM 244 / SL1))).